The following is a 544-amino-acid chain: Chaperonin GroEL 2 (544 aa).

Residues 30–33 (TLGP), K51, 87–91 (DGTTT), G415, and D496 each bind ATP.

Belongs to the chaperonin (HSP60) family. Forms a cylinder of 14 subunits composed of two heptameric rings stacked back-to-back. Interacts with the co-chaperonin GroES.

It is found in the cytoplasm. It catalyses the reaction ATP + H2O + a folded polypeptide = ADP + phosphate + an unfolded polypeptide.. Functionally, together with its co-chaperonin GroES, plays an essential role in assisting protein folding. The GroEL-GroES system forms a nano-cage that allows encapsulation of the non-native substrate proteins and provides a physical environment optimized to promote and accelerate protein folding. The sequence is that of Chaperonin GroEL 2 from Rhizobium johnstonii (strain DSM 114642 / LMG 32736 / 3841) (Rhizobium leguminosarum bv. viciae).